A 295-amino-acid chain; its full sequence is Acetaldehyde dehydrogenase 2 (295 aa).

17 to 20 contacts NAD(+); the sequence is TGNI. Residue C132 is the Acyl-thioester intermediate of the active site. Residues 164–172 and N275 contribute to the NAD(+) site; that span reads SVGPASRAN.

Belongs to the acetaldehyde dehydrogenase family.

It carries out the reaction acetaldehyde + NAD(+) + CoA = acetyl-CoA + NADH + H(+). The chain is Acetaldehyde dehydrogenase 2 from Salinispora arenicola (strain CNS-205).